Consider the following 324-residue polypeptide: Olfactory receptor 52N5 (324 aa).

Topologically, residues 1–33 (MPLFNSLCWFPTIHVTPPSFILNGIPGLERVHV) are extracellular. A helical transmembrane segment spans residues 34 to 54 (WISLPLCTMYIIFLVGNLGLV). The Cytoplasmic segment spans residues 55-62 (YLIYYEES). Residues 63–84 (LHHPMYFFFGHALSLIDLLTCT) traverse the membrane as a helical segment. The Extracellular portion of the chain corresponds to 85-108 (TTLPNALCIFWFSLKEINFNACLA). A disulfide bridge connects residues C106 and C198. A helical transmembrane segment spans residues 109–129 (QMFFVHGFTGVESGVLMLMAL). At 130 to 148 (DRYVAICYPLRYATTLTNP) the chain is on the cytoplasmic side. The helical transmembrane segment at 149 to 169 (IIAKAELATFLRGVLLMIPFP) threads the bilayer. The Extracellular segment spans residues 170 to 205 (FLVKRLPFCQSNIISHTYCDHMSVVKLSCASIKVNV). Residues 206–226 (IYGLMVALLIGVFDICCISLS) traverse the membrane as a helical segment. Over 227–246 (YTLILKAAISLSSSDARQKA) the chain is Cytoplasmic. Residues 247–267 (FSTCTAHISAIIITYVPAFFT) traverse the membrane as a helical segment. The Extracellular portion of the chain corresponds to 268-283 (FFAHRFGGHTIPPSLH). Residues 284–304 (IIVANLYLLLPPTLNPIVYGV) form a helical membrane-spanning segment. The Cytoplasmic segment spans residues 305-324 (KTKQIRKSVIKFFQGDKGAG).

It belongs to the G-protein coupled receptor 1 family.

The protein resides in the cell membrane. Its function is as follows. Odorant receptor. This Homo sapiens (Human) protein is Olfactory receptor 52N5 (OR52N5).